We begin with the raw amino-acid sequence, 386 residues long: Mannitol-1-phosphate 5-dehydrogenase (386 aa).

6–17 (AIHFGGGNIGRG) is an NAD(+) binding site. Lys214 is a catalytic residue.

The protein belongs to the mannitol dehydrogenase family. Monomer.

It carries out the reaction D-mannitol 1-phosphate + NAD(+) = beta-D-fructose 6-phosphate + NADH + H(+). Its function is as follows. Catalyzes the NAD(H)-dependent interconversion of D-fructose 6-phosphate and D-mannitol 1-phosphate in the mannitol metabolic pathway. Plays a key role in liamocins biosynthesis by providing the mannitol moity that is linked to 3,5-dihydroxydecanoic acid (provided by the HR-PKS PKS1) via ester bond formation catalyzed by the esterase EST1. The protein is Mannitol-1-phosphate 5-dehydrogenase of Aureobasidium melanogenum (Aureobasidium pullulans var. melanogenum).